The following is an 85-amino-acid chain: MVQQKVEVRLKTGLQARPAALFVQEANRFTSDVFLEKDGKKVNAKSIMGLMSLAVSTGTEVTLIAQGEDEQEALEKLAAYVQEEV.

In terms of domain architecture, HPr spans 1–85 (MVQQKVEVRL…KLAAYVQEEV (85 aa)). Ser46 is subject to Phosphoserine; by HPrK/P.

Belongs to the HPr family. In terms of assembly, mixture of monomers and homodimers. Interacts with CcpA as a monomer.

Along with seryl-phosphorylated HPr, phosphorylated Crh is implicated in carbon catabolite repression (CCR) of levanase, inositol dehydrogenase, and beta-xylosidase. Exerts its effect on CCR by interacting with CcpA. This Bacillus subtilis (strain 168) protein is HPr-like protein Crh (crh).